A 308-amino-acid chain; its full sequence is MAWQQLHLQCEKDNVDLAEALLLEAGALSIALDDAGDQPLFEPLPGESPLWDEVILTGLFDATTEAGTSHVIEQFSHEIAAQVQASRTWVSAVDDKDWEREWMSNYKPIECANDLWIVPNWLTPPNPEATNIIMDPGLAFGTGYHATTRLCLDWLTEQDLKDKVVIDYGCGSGILGIAALLLGARHVYAVDIDPQAVLATNQNAARNSVDNRLQAFLPEDFTIFCQQQDIPAVEVMVANILAKPLIGLAPYFATLMASKSRIVLAGLIESQTEQVTEAYQPYFALDPKHAFTAQEDQHWQRLSGTFTG.

S-adenosyl-L-methionine is bound by residues Thr148, Gly169, Asp191, and Asn239.

This sequence belongs to the methyltransferase superfamily. PrmA family.

Its subcellular location is the cytoplasm. It carries out the reaction L-lysyl-[protein] + 3 S-adenosyl-L-methionine = N(6),N(6),N(6)-trimethyl-L-lysyl-[protein] + 3 S-adenosyl-L-homocysteine + 3 H(+). Methylates ribosomal protein L11. The protein is Ribosomal protein L11 methyltransferase of Psychrobacter arcticus (strain DSM 17307 / VKM B-2377 / 273-4).